Reading from the N-terminus, the 424-residue chain is Probable serine/threonine-protein kinase PBL12 (424 aa).

Positions 88–368 constitute a Protein kinase domain; that stretch reads FSRSNMLGEG…CEVVKVLESI (281 aa). ATP is bound by residues 94–102 and lysine 123; that span reads LGEGGFGPV. The Proton acceptor role is filled by aspartate 218.

This sequence belongs to the protein kinase superfamily. Ser/Thr protein kinase family. In terms of tissue distribution, expressed specifically in roots.

It localises to the cell membrane. It carries out the reaction L-seryl-[protein] + ATP = O-phospho-L-seryl-[protein] + ADP + H(+). The catalysed reaction is L-threonyl-[protein] + ATP = O-phospho-L-threonyl-[protein] + ADP + H(+). May play a role in the signal transduction pathway of osmotic stress. May be involved in plant defense signaling. This chain is Probable serine/threonine-protein kinase PBL12, found in Arabidopsis thaliana (Mouse-ear cress).